We begin with the raw amino-acid sequence, 444 residues long: MAAAEVFGGCVLEGSVRVSGAKNSTTKLLVASLLSDRKCVLRNVPDIGDVRLTVELCRSLGSIVHWDKQAEVIEIHTPEIHMSEVSAQFSRVNRIPILLLGALLARCPEGVVVPCVGGDAIGERTLNFHFEGLEQLGAKVAYDGHGYQAAAPKGLIGAYITLPYPSVGATENLILASVRAQGRTIIKNAALEVEILDLILFLQKAGVEITTDNDRTIEIFGCEDFYEVDHWVIPDKIEAASFGMAAVLTGGRVFVENAEQHLMIPFLKTLRSIGGGFSVTETGIEFFYNEPLKGGVVLETDVHPGFLTDWQQPFSVLLSQAEGSSVIHETVHENRLGYLRGLQKMGANCELFYQCLSSKACRYATGNFPHSAIIHGVTPLKASQLVIPDLRAGFAYIMAALIAEGGPSLIKNTQLLDRGYYNWVDKLNSLGAKIHLLSLDPVAF.

22–23 is a binding site for phosphoenolpyruvate; sequence KN. Residue Arg94 participates in UDP-N-acetyl-alpha-D-glucosamine binding. Asp119 acts as the Proton donor in catalysis. 2 residues coordinate UDP-N-acetyl-alpha-D-glucosamine: Asp309 and Val331.

The protein belongs to the EPSP synthase family. MurA subfamily.

It localises to the cytoplasm. The enzyme catalyses phosphoenolpyruvate + UDP-N-acetyl-alpha-D-glucosamine = UDP-N-acetyl-3-O-(1-carboxyvinyl)-alpha-D-glucosamine + phosphate. It participates in cell wall biogenesis; peptidoglycan biosynthesis. Cell wall formation. Adds enolpyruvyl to UDP-N-acetylglucosamine. This Chlamydia abortus (strain DSM 27085 / S26/3) (Chlamydophila abortus) protein is UDP-N-acetylglucosamine 1-carboxyvinyltransferase.